The following is a 675-amino-acid chain: tRNA 5-methylaminomethyl-2-thiouridine biosynthesis bifunctional protein MnmC (675 aa).

The segment at 1 to 245 is tRNA (mnm(5)s(2)U34)-methyltransferase; sequence MANLPIQHAS…KREMLSGLLP (245 aa). Residues 271–675 form an FAD-dependent cmnm(5)s(2)U34 oxidoreductase region; the sequence is IGGGIASVLT…LLKGKPVTHD (405 aa).

The protein in the N-terminal section; belongs to the methyltransferase superfamily. tRNA (mnm(5)s(2)U34)-methyltransferase family. This sequence in the C-terminal section; belongs to the DAO family. It depends on FAD as a cofactor.

The protein localises to the cytoplasm. It carries out the reaction 5-aminomethyl-2-thiouridine(34) in tRNA + S-adenosyl-L-methionine = 5-methylaminomethyl-2-thiouridine(34) in tRNA + S-adenosyl-L-homocysteine + H(+). Its function is as follows. Catalyzes the last two steps in the biosynthesis of 5-methylaminomethyl-2-thiouridine (mnm(5)s(2)U) at the wobble position (U34) in tRNA. Catalyzes the FAD-dependent demodification of cmnm(5)s(2)U34 to nm(5)s(2)U34, followed by the transfer of a methyl group from S-adenosyl-L-methionine to nm(5)s(2)U34, to form mnm(5)s(2)U34. The protein is tRNA 5-methylaminomethyl-2-thiouridine biosynthesis bifunctional protein MnmC of Pectobacterium atrosepticum (strain SCRI 1043 / ATCC BAA-672) (Erwinia carotovora subsp. atroseptica).